We begin with the raw amino-acid sequence, 177 residues long: Large ribosomal subunit protein uL5m (177 aa).

This sequence belongs to the universal ribosomal protein uL5 family.

Its subcellular location is the mitochondrion. In Acanthamoeba castellanii (Amoeba), this protein is Large ribosomal subunit protein uL5m (RPL5).